A 134-amino-acid polypeptide reads, in one-letter code: Lymphocyte antigen 6I (134 aa).

The first 21 residues, M1–A21, serve as a signal peptide directing secretion. The region spanning L27 to N105 is the UPAR/Ly6 domain. 5 disulfides stabilise this stretch: C29–C53, C32–C41, C46–C74, C78–C98, and C99–C104. An N-linked (GlcNAc...) asparagine glycan is attached at N95. The GPI-anchor amidated glycine moiety is linked to residue G112. Residues S113–M134 constitute a propeptide, removed in mature form.

In terms of tissue distribution, expressed in hematopoietic tissue (spleen, thymus, bone marrow). Also found in peritoneal macrophages, peripheral blood leukocytes, liver, heart, brain, kidney and lung.

The protein resides in the cell membrane. This Mus musculus (Mouse) protein is Lymphocyte antigen 6I (Ly6i).